A 483-amino-acid polypeptide reads, in one-letter code: Probable glycosyltransferase 6 (483 aa).

Residues 1–40 are Cytoplasmic-facing; it reads MAASETAPFGVSAASKGGGGVAGARAQHGQLAVAGRVHDA. A helical; Signal-anchor for type II membrane protein transmembrane segment spans residues 41 to 61; the sequence is LVFAAGAVAAVLVLLATASFL. Over 62–483 the chain is Lumenal; that stretch reads SPMPVTNLVA…PLPFDYPAAR (422 aa). An N-linked (GlcNAc...) asparagine glycan is attached at asparagine 144.

Belongs to the glycosyltransferase 34 family.

It is found in the golgi apparatus membrane. Functionally, probable glycosyltransferase that may be involved in the biosynthesis of xyloglucan. In Oryza sativa subsp. japonica (Rice), this protein is Probable glycosyltransferase 6.